The sequence spans 473 residues: UDP-glycosyltransferase 71B1 (473 aa).

The active-site Proton acceptor is the histidine 15. Histidine 15 is an an anthocyanidin binding site. Aspartate 110 (charge relay) is an active-site residue. Residues threonine 132, alanine 342, glutamine 344, histidine 359, tryptophan 362, asparagine 363, serine 364, and glutamate 367 each contribute to the UDP-alpha-D-glucose site. Alanine 382 provides a ligand contact to an anthocyanidin. Positions 383 and 384 each coordinate UDP-alpha-D-glucose.

This sequence belongs to the UDP-glycosyltransferase family.

The catalysed reaction is a flavonol + UDP-alpha-D-glucose = a flavonol 3-O-beta-D-glucoside + UDP + H(+). In terms of biological role, possesses quercetin 3-O-glucosyltransferase activity in vitro. Also active in vitro on benzoates and benzoate derivatives. This chain is UDP-glycosyltransferase 71B1 (UGT71B1), found in Arabidopsis thaliana (Mouse-ear cress).